The chain runs to 268 residues: Ribosomal RNA large subunit methyltransferase E (268 aa).

Positions 1–60 (MKPPRSRSGSSKDTGPKRIPGKALKSASNPGENDATLDSATARTARNKTVSLRTARGRTT) are disordered. The segment covering 26 to 52 (SASNPGENDATLDSATARTARNKTVSL) has biased composition (polar residues). The S-adenosyl-L-methionine site is built by Gly-115, Trp-117, Asp-133, Asp-149, and Asp-173. The Proton acceptor role is filled by Lys-213.

This sequence belongs to the class I-like SAM-binding methyltransferase superfamily. RNA methyltransferase RlmE family.

It localises to the cytoplasm. It carries out the reaction uridine(2552) in 23S rRNA + S-adenosyl-L-methionine = 2'-O-methyluridine(2552) in 23S rRNA + S-adenosyl-L-homocysteine + H(+). Its function is as follows. Specifically methylates the uridine in position 2552 of 23S rRNA at the 2'-O position of the ribose in the fully assembled 50S ribosomal subunit. The chain is Ribosomal RNA large subunit methyltransferase E from Gluconobacter oxydans (strain 621H) (Gluconobacter suboxydans).